Consider the following 511-residue polypeptide: 2-isopropylmalate synthase (511 aa).

A Pyruvate carboxyltransferase domain is found at 6-269 (IIIFDTTLRD…YTDIKCENIF (264 aa)). Mn(2+) contacts are provided by Asp-15, His-203, His-205, and Asn-239. The segment at 394-511 (ILEKLSVISG…SLKVEERKMA (118 aa)) is regulatory domain.

Belongs to the alpha-IPM synthase/homocitrate synthase family. LeuA type 1 subfamily. In terms of assembly, homodimer. Requires Mn(2+) as cofactor.

The protein resides in the cytoplasm. It catalyses the reaction 3-methyl-2-oxobutanoate + acetyl-CoA + H2O = (2S)-2-isopropylmalate + CoA + H(+). The protein operates within amino-acid biosynthesis; L-leucine biosynthesis; L-leucine from 3-methyl-2-oxobutanoate: step 1/4. Functionally, catalyzes the condensation of the acetyl group of acetyl-CoA with 3-methyl-2-oxobutanoate (2-ketoisovalerate) to form 3-carboxy-3-hydroxy-4-methylpentanoate (2-isopropylmalate). The polypeptide is 2-isopropylmalate synthase (Campylobacter jejuni subsp. jejuni serotype O:6 (strain 81116 / NCTC 11828)).